Here is a 122-residue protein sequence, read N- to C-terminus: Large ribosomal subunit protein uL14 (122 aa).

Belongs to the universal ribosomal protein uL14 family. In terms of assembly, part of the 50S ribosomal subunit. Forms a cluster with proteins L3 and L19. In the 70S ribosome, L14 and L19 interact and together make contacts with the 16S rRNA in bridges B5 and B8.

Binds to 23S rRNA. Forms part of two intersubunit bridges in the 70S ribosome. The sequence is that of Large ribosomal subunit protein uL14 from Pseudomonas entomophila (strain L48).